Consider the following 240-residue polypeptide: MTATRRVSRPGPVRWMVYLGAVVAIAWLATQAFYFGQIAVWNYVNPQSTSFMRSDTWRLSQDRPDLSVQHTWVSYDQISRNLKRAIIASEDANFVNNNGYETDAILQAWERNKAKGKIVRGGSTITQQLARNLFLSREKSYIRKGQELIITWMLETLMDKERIFEIYLNSVEWGNGVYGAEAAAHYYYKTSASKLTAAQSARLAVMLPQPKYFDEHRGSQYLAQRARVIARRMGAAELPD.

The chain crosses the membrane as a helical span at residues 15 to 35 (WMVYLGAVVAIAWLATQAFYF).

It belongs to the glycosyltransferase 51 family.

It is found in the cell inner membrane. It carries out the reaction [GlcNAc-(1-&gt;4)-Mur2Ac(oyl-L-Ala-gamma-D-Glu-L-Lys-D-Ala-D-Ala)](n)-di-trans,octa-cis-undecaprenyl diphosphate + beta-D-GlcNAc-(1-&gt;4)-Mur2Ac(oyl-L-Ala-gamma-D-Glu-L-Lys-D-Ala-D-Ala)-di-trans,octa-cis-undecaprenyl diphosphate = [GlcNAc-(1-&gt;4)-Mur2Ac(oyl-L-Ala-gamma-D-Glu-L-Lys-D-Ala-D-Ala)](n+1)-di-trans,octa-cis-undecaprenyl diphosphate + di-trans,octa-cis-undecaprenyl diphosphate + H(+). The protein operates within cell wall biogenesis; peptidoglycan biosynthesis. Peptidoglycan polymerase that catalyzes glycan chain elongation from lipid-linked precursors. The protein is Biosynthetic peptidoglycan transglycosylase of Paraburkholderia phytofirmans (strain DSM 17436 / LMG 22146 / PsJN) (Burkholderia phytofirmans).